We begin with the raw amino-acid sequence, 165 residues long: Urease accessory protein UreE (165 aa).

This sequence belongs to the UreE family.

The protein resides in the cytoplasm. Involved in urease metallocenter assembly. Binds nickel. Probably functions as a nickel donor during metallocenter assembly. This chain is Urease accessory protein UreE, found in Micrococcus luteus (strain ATCC 4698 / DSM 20030 / JCM 1464 / CCM 169 / CCUG 5858 / IAM 1056 / NBRC 3333 / NCIMB 9278 / NCTC 2665 / VKM Ac-2230) (Micrococcus lysodeikticus).